The chain runs to 180 residues: Outer membrane protein YfaZ (180 aa).

The N-terminal stretch at 1-21 is a signal peptide; sequence MKKIALAGLAGMLLVSASVNA.

It localises to the cell outer membrane. The polypeptide is Outer membrane protein YfaZ (yfaZ) (Escherichia coli (strain K12)).